We begin with the raw amino-acid sequence, 104 residues long: SPbeta prophage-derived stress response protein SCP1 (104 aa).

Its subcellular location is the cytoplasm. In Bacillus subtilis (strain 168), this protein is SPbeta prophage-derived stress response protein SCP1 (yorD).